Reading from the N-terminus, the 329-residue chain is Biotin synthase (329 aa).

The Radical SAM core domain occupies 48–278; the sequence is FLGNGVDLCS…TKKIAVCGGR (231 aa). Residues Cys-66, Cys-70, and Cys-73 each coordinate [4Fe-4S] cluster. Positions 143 and 203 each coordinate [2Fe-2S] cluster.

This sequence belongs to the radical SAM superfamily. Biotin synthase family. As to quaternary structure, homodimer. The cofactor is [4Fe-4S] cluster. It depends on [2Fe-2S] cluster as a cofactor.

It carries out the reaction (4R,5S)-dethiobiotin + (sulfur carrier)-SH + 2 reduced [2Fe-2S]-[ferredoxin] + 2 S-adenosyl-L-methionine = (sulfur carrier)-H + biotin + 2 5'-deoxyadenosine + 2 L-methionine + 2 oxidized [2Fe-2S]-[ferredoxin]. It functions in the pathway cofactor biosynthesis; biotin biosynthesis; biotin from 7,8-diaminononanoate: step 2/2. Functionally, catalyzes the conversion of dethiobiotin (DTB) to biotin by the insertion of a sulfur atom into dethiobiotin via a radical-based mechanism. This is Biotin synthase from Geobacter metallireducens (strain ATCC 53774 / DSM 7210 / GS-15).